The chain runs to 274 residues: S-methyl-5'-thioadenosine phosphorylase (274 aa).

Residues serine 20, 62–63 (RH), and 95–96 (SA) each bind phosphate. Methionine 194 is a binding site for substrate. Threonine 195 lines the phosphate pocket. A substrate-binding site is contributed by 218 to 220 (DYD).

The protein belongs to the PNP/MTAP phosphorylase family. MTAP subfamily. In terms of assembly, homohexamer. Dimer of a homotrimer.

The enzyme catalyses S-methyl-5'-thioadenosine + phosphate = 5-(methylsulfanyl)-alpha-D-ribose 1-phosphate + adenine. Its pathway is amino-acid biosynthesis; L-methionine biosynthesis via salvage pathway; S-methyl-5-thio-alpha-D-ribose 1-phosphate from S-methyl-5'-thioadenosine (phosphorylase route): step 1/1. Its function is as follows. Catalyzes the reversible phosphorylation of S-methyl-5'-thioadenosine (MTA) to adenine and 5-methylthioribose-1-phosphate. Involved in the breakdown of MTA, a major by-product of polyamine biosynthesis. Responsible for the first step in the methionine salvage pathway after MTA has been generated from S-adenosylmethionine. Has broad substrate specificity with 6-aminopurine nucleosides as preferred substrates. The chain is S-methyl-5'-thioadenosine phosphorylase from Hyperthermus butylicus (strain DSM 5456 / JCM 9403 / PLM1-5).